The primary structure comprises 189 residues: UPF0301 protein PLES_04031 (189 aa).

This sequence belongs to the UPF0301 (AlgH) family.

This Pseudomonas aeruginosa (strain LESB58) protein is UPF0301 protein PLES_04031.